The primary structure comprises 258 residues: Small ribosomal subunit protein uS2 (258 aa).

Belongs to the universal ribosomal protein uS2 family.

This chain is Small ribosomal subunit protein uS2, found in Leuconostoc citreum (strain KM20).